The following is a 3938-amino-acid chain: Protein bassoon (3938 aa).

Residues 1–158 form a disordered region; it reads MGNEASLEGG…PTSPYSVPQI (158 aa). G2 carries the N-myristoyl glycine lipid modification. The span at 9 to 29 shows a compositional bias: gly residues; the sequence is GGAGEGPLPPGGSGLGPGPGA. Over residues 31–61 the composition is skewed to low complexity; it reads KPPSALAGGGQLPVAGAARAAGPPTPGLGLV. The interval 62 to 70 is 4 X 2 AA tandem repeats of P-G; sequence PGPGPGPGP. 2 stretches are compositionally biased toward polar residues: residues 86–98 and 127–154; these read QRAT…QASA and QVDS…SPYS. Residue S142 is modified to Phosphoserine. An Omega-N-methylarginine modification is found at R145. 2 C4-type zinc fingers span residues 167–190 and 195–217; these read CPIC…CTQC and CNQC…CLNC. Disordered stretches follow at residues 228–346 and 361–456; these read TTAP…LTGK and LMSV…KTMP. The span at 230–240 shows a compositional bias: polar residues; that stretch reads APRSKSQQQLH. S241 and S245 each carry phosphoserine. The segment covering 361–376 has biased composition (polar residues); it reads LMSVQPEADTQGQPSP. Pro residues predominate over residues 394–406; it reads PRPPGSGPGPGPT. 2 C4-type zinc fingers span residues 462 to 485 and 490 to 512; these read CPLC…CTAC and CTLC…CLNC. 4 disordered regions span residues 523–921, 934–1247, 1294–1541, and 1561–1611; these read GEPA…LQGG, GRLW…TPAG, MDPM…WQQS, and RMVH…RAPS. A compositionally biased stretch (pro residues) spans 526-539; that stretch reads APLPLPTPQEPPAG. The span at 548–589 shows a compositional bias: low complexity; it reads SPLKQKGPQGPGQPSGSLPPKASPQAAKASPQAAKASPQAKP. 3 consecutive repeat copies span residues 568–574, 575–581, and 582–588. A 3 X 7 AA tandem repeats of K-A-S-P-Q-A-[AK] region spans residues 568–588; it reads KASPQAAKASPQAAKASPQAK. Pro residues predominate over residues 616-629; it reads VPKPPPETAVPPGT. Polar residues predominate over residues 668–677; that stretch reads QDLSRSPQSL. The span at 678 to 692 shows a compositional bias: low complexity; sequence SDTGYSSDGVSSSQS. Over residues 693–702 the composition is skewed to polar residues; sequence EITGVVQQEV. Composition is skewed to acidic residues over residues 769–784 and 847–858; these read FDSD…EDDS and SAEEDNLEEDDT. R863 bears the Omega-N-methylarginine mark. S965 carries the phosphoserine modification. Residues 979–996 are compositionally biased toward low complexity; that stretch reads PASTPSYTSGTSPTSLSS. The stretch at 1032–1087 forms a coiled coil; the sequence is IEDSSEEEELREEEELLREQEKMREVEQQRIRSTARKTRRDKEELRAQRRRERSKT. The span at 1034-1047 shows a compositional bias: acidic residues; it reads DSSEEEELREEEEL. Phosphoserine occurs at positions 1035 and 1036. Residues 1048-1061 are compositionally biased toward basic and acidic residues; that stretch reads LREQEKMREVEQQR. Phosphoserine is present on S1085. A Phosphothreonine modification is found at T1087. Residues S1093 and S1099 each carry the phosphoserine modification. Basic and acidic residues predominate over residues 1102–1117; that stretch reads EELRQAAEMEELHRSS. Low complexity-rich tracts occupy residues 1118 to 1128 and 1158 to 1175; these read CSEYSPSPSLD and SPTE…SGRP. Residues 1176-1203 are a coiled coil; it reads LKSAEEAYEDMMRKAELLQRQQGQAAGA. The segment covering 1177-1192 has biased composition (basic and acidic residues); it reads KSAEEAYEDMMRKAEL. A compositionally biased stretch (low complexity) spans 1194-1204; the sequence is QRQQGQAAGAR. Residues 1211-1224 show a composition bias toward polar residues; that stretch reads SQPTGPRSQGSFEY. Phosphoserine is present on S1221. A compositionally biased stretch (low complexity) spans 1318–1328; sequence SFPTSTSSDSS. The O-linked (GlcNAc) threonine glycan is linked to T1339. Positions 1342–1351 are enriched in basic and acidic residues; it reads FAKEPQEPLK. Low complexity-rich tracts occupy residues 1352–1364 and 1374–1386; these read LHSS…LASK and PGTP…APCP. T1380 is a glycosylation site (O-linked (GlcNAc) threonine). Residues 1402-1426 show a composition bias toward polar residues; sequence SPSTSSTIHSYGQPPTTANYGSQTE. A phosphoserine mark is found at S1470, S1479, and S1481. Low complexity predominate over residues 1476 to 1487; sequence STPSESPTFSPS. Polar residues-rich tracts occupy residues 1496 to 1510 and 1561 to 1597; these read EFST…SSDI and RMVH…SQMP. Omega-N-methylarginine occurs at positions 1780 and 1784. R1794 carries the post-translational modification Asymmetric dimethylarginine; alternate. Omega-N-methylarginine; alternate is present on R1794. At R1806 the chain carries Omega-N-methylarginine. Residues 1914-1964 are disordered; the sequence is PSAPDKSVTDAALPGQSSGPFYSPRDPEPPEPLTFRAQGVVGPGPHEEQRP. O-linked (GlcNAc) threonine glycosylation occurs at T1922. A phosphoserine mark is found at S1978 and S2034. An omega-N-methylarginine mark is found at R2039 and R2069. 3 positions are modified to asymmetric dimethylarginine: R2243, R2253, and R2259. Residues 2280-2305 form a disordered region; it reads AAKASGAGGPPRPELPAGGAREEPLS. T2307 carries O-linked (GlcNAc) threonine glycosylation. 2 disordered regions span residues 2318-2343 and 2461-2486; these read VAQA…SGVL and EEQK…PPAA. A coiled-coil region spans residues 2345-2470; the sequence is RPVMEKEEAS…EEQKQRQKAP (126 aa). A glycan (O-linked (GlcNAc) threonine) is linked at T2510. The interval 2513–2648 is disordered; sequence PGQAREPVLH…HEASASSSAA (136 aa). Positions 2527–2537 are enriched in polar residues; the sequence is SSASDMSLQTE. Residue S2564 is modified to Phosphoserine. Residues T2581 and T2608 each carry the phosphothreonine modification. The span at 2629-2641 shows a compositional bias: basic and acidic residues; that stretch reads RHSDSGSDSKHEA. T2685 carries O-linked (GlcNAc) threonine glycosylation. The interaction with DAO stretch occupies residues 2715–3263; that stretch reads EPDGQAQGVA…GGVSGRPGKD (549 aa). 3 positions are modified to phosphoserine: S2796, S2845, and S2851. The segment at 2839-2859 is disordered; the sequence is TLQRSLSDPKPLSPTAEESAK. T2930 carries an O-linked (GlcNAc) threonine glycan. Residues 2933–2975 adopt a coiled-coil conformation; that stretch reads SLLRELDRDLRLVEHESTKLRKKQAELDEEEKEIDAKLKYLEL. The tract at residues 2934 to 2996 is sufficient for binding to ERC2; sequence LLRELDRDLR…DRVGRDYPPL (63 aa). Position 3007 is a phosphoserine (S3007). Residues 3055–3068 show a composition bias toward polar residues; the sequence is TQYTAGSSGPTQNG. Disordered stretches follow at residues 3055–3148, 3162–3399, 3414–3546, and 3569–3910; these read TQYT…ADLE, AVTV…SRKF, QQRY…PRAH, and YHLG…VFSK. The segment covering 3184–3196 has biased composition (basic and acidic residues); that stretch reads EHGKAPEHPRGGD. Over residues 3198–3222 the composition is skewed to polar residues; it reads SSVSQSPAPTYPSDSHYTSLEQNVP. The residue at position 3286 (S3286) is a Phosphoserine. A compositionally biased stretch (polar residues) spans 3304–3315; it reads ESNGRPASTHYY. Composition is skewed to basic and acidic residues over residues 3316–3328, 3358–3377, and 3450–3469; these read SDSD…RADK, QGME…KDVE, and LSSH…RETA. S3368 is subject to Phosphoserine. Residue R3488 is modified to Omega-N-methylarginine. Over residues 3506 to 3520 the composition is skewed to low complexity; the sequence is PLGRPRPAGGALPPG. 2 stretches are compositionally biased toward basic and acidic residues: residues 3535–3546 and 3578–3588; these read VQEHVKDGPRAH and WFDKPRDARSD. Residues 3638–3651 show a composition bias toward basic residues; the sequence is EHRHHGDHGRHSGR. Residues 3652-3676 are compositionally biased toward basic and acidic residues; the sequence is HAGEEPGRRAARPHARDMGRHETRP. Positions 3751-3820 are enriched in low complexity; the sequence is PQQSQPPSSR…ARLQQQSQPT (70 aa). Residues 3772 to 3803 adopt a coiled-coil conformation; sequence QTQQQQQQQQQQQQQQQQQQQQQQQQGLGQQA. Residue R3822 is modified to Omega-N-methylarginine. Over residues 3834–3848 the composition is skewed to pro residues; that stretch reads KPQPGPTTAPGPQPA. 2 stretches are compositionally biased toward low complexity: residues 3860–3887 and 3894–3904; these read KPAA…KTGA and GAPAGQPAAEG.

Interacts with PCLO, ERC2/CAST1, RIMS1 and UNC13A. Interacts with TPRG1L. Interacts with DYNLL1 and DYNLL2; these interactions potentially link PTVs to dynein and myosin V motor complexes. Interacts with ATG5; this interaction is important for the regulation of presynaptic autophagy. Interacts (via C-terminus) with TRIO (via N-terminus). Interacts with CTBP1. Interacts with SIAH1; this interaction negatively regulates SIAH1 E3 ligase activity. Interacts (via coiled region) with DAO; the interaction is direct. In terms of processing, myristoylated. The N-terminal myristoylation is not sufficient for presynaptic localization. Detected at synapses in the stratum lucidum in the hippocampus CA3 region (at protein level).

The protein localises to the cytoplasm. It localises to the presynaptic active zone. Its subcellular location is the cytoskeleton. It is found in the cytoplasmic vesicle. The protein resides in the secretory vesicle. The protein localises to the synaptic vesicle membrane. Its function is as follows. Scaffold protein of the presynaptic cytomatrix at the active zone (CAZ) which is the place in the synapse where neurotransmitter is released. After synthesis, participates in the formation of Golgi-derived membranous organelles termed Piccolo-Bassoon transport vesicles (PTVs) that are transported along axons to sites of nascent synaptic contacts. At the presynaptic active zone, regulates the spatial organization of synaptic vesicle cluster, the protein complexes that execute membrane fusion and compensatory endocytosis. Also functions in processes other than assembly such as the regulation of specific presynaptic protein ubiquitination by interacting with SIAH1 or the regulation of presynaptic autophagy by associating with ATG5. Also mediates synapse to nucleus communication leading to reconfiguration of gene expression by associating with the transcriptional corepressor CTBP1 and by subsequently reducing the size of its pool available for nuclear import. Inhibits the activity of the proportion of DAO enzyme that localizes to the presynaptic active zone, which may modulate synaptic transmission. This is Protein bassoon from Rattus norvegicus (Rat).